The following is a 153-amino-acid chain: Cytochrome c-type biogenesis protein CcmE (153 aa).

The Cytoplasmic portion of the chain corresponds to 1–8 (MTPVQRRR). Residues 9–29 (LAWVLLALLASGLATALVAMA) form a helical; Signal-anchor for type II membrane protein membrane-spanning segment. At 30–153 (LERNIAYLYT…DVPVTAPEVR (124 aa)) the chain is on the extracellular side. Heme-binding residues include His-123 and Tyr-127.

It belongs to the CcmE/CycJ family.

It is found in the cell membrane. Heme chaperone required for the biogenesis of c-type cytochromes. Transiently binds heme delivered by CcmC and transfers the heme to apo-cytochromes in a process facilitated by CcmF and CcmH. This is Cytochrome c-type biogenesis protein CcmE from Stenotrophomonas maltophilia (strain K279a).